The following is a 144-amino-acid chain: Large ribosomal subunit protein uL13 (144 aa).

Belongs to the universal ribosomal protein uL13 family. Part of the 50S ribosomal subunit.

Its function is as follows. This protein is one of the early assembly proteins of the 50S ribosomal subunit, although it is not seen to bind rRNA by itself. It is important during the early stages of 50S assembly. The chain is Large ribosomal subunit protein uL13 from Oleidesulfovibrio alaskensis (strain ATCC BAA-1058 / DSM 17464 / G20) (Desulfovibrio alaskensis).